The chain runs to 147 residues: uncharacterized protein (147 aa).

The 137-residue stretch at 11-147 folds into the HTH marR-type domain; the sequence is NTSPGFLLWQ…SGLQELLKHE (137 aa). Residues 61–84 constitute a DNA-binding region (H-T-H motif); sequence QKKLASFSQTNIMMVSEVVRTLEK.

This is an uncharacterized protein from Bacillus subtilis (strain 168).